The chain runs to 118 residues: Protein BEX4 (118 aa).

The disordered stretch occupies residues 14–50 (VEKDKKNKKGGKASKQSEEESHHLEEVENKKPGGNVR). The span at 28–44 (KQSEEESHHLEEVENKK) shows a compositional bias: basic and acidic residues. The interaction with SIRT2 stretch occupies residues 30–88 (SEEESHHLEEVENKKPGGNVRRKVRRLVPNFLWAIPNRHVDHSEGGEEVGRFVGQVMEA). Residues 30 to 118 (SEEESHHLEE…DNHYDFCLIP (89 aa)) are interaction with alpha-tubulin. Zn(2+) is bound at residue cysteine 115.

It belongs to the BEX family. As to quaternary structure, interacts with alpha-tubulin. Interacts with SIRT2. Ubiquitinated and degraded by the proteasome.

Its subcellular location is the cytoplasm. It localises to the cytoskeleton. The protein localises to the spindle pole. The protein resides in the nucleus. May play a role in microtubule deacetylation by negatively regulating the SIRT2 deacetylase activity toward alpha-tubulin and thereby participate in the control of cell cycle progression and genomic stability. In absence of reductive stress, acts as a pseudosubstrate for the CRL2(FEM1B) complex: associates with FEM1B via zinc, thereby preventing association between FEM1B and its substrates. In Rattus norvegicus (Rat), this protein is Protein BEX4.